The sequence spans 1177 residues: Lysylphosphatidylglycerol biosynthesis bifunctional protein LysX (1177 aa).

Disordered regions lie at residues 1-40 and 61-85; these read MRRA…AKFV and VTLA…PANR. The phosphatidylglycerol lysyltransferase stretch occupies residues 1 to 676; it reads MRRAGRSRQF…LLHHDGSAPD (676 aa). Over residues 8–21 the composition is skewed to polar residues; the sequence is RQFSSVEEAFSTSA. Positions 65–82 are enriched in low complexity; it reads SPGSRSGSGPRSGPRLGP. A run of 6 helical transmembrane segments spans residues 93 to 113, 135 to 155, 159 to 179, 189 to 209, 227 to 247, and 281 to 301; these read VPAA…LGSV, FPDT…ALTA, IAWL…VADI, IFGE…LVLA, AVLV…VELF, and VFLN…ATIV. Residues 673–693 form a disordered region; sequence SAPDVSGLRPERTDAEEARSR. The tract at residues 677 to 1177 is lysine--tRNA ligase; that stretch reads VSGLRPERTD…TLPFPLAKPH (501 aa). The span at 681-693 shows a compositional bias: basic and acidic residues; sequence RPERTDAEEARSR. 2 residues coordinate Mg(2+): aspartate 1089 and glutamate 1096.

It in the N-terminal section; belongs to the LPG synthetase family. This sequence in the C-terminal section; belongs to the class-II aminoacyl-tRNA synthetase family. Mg(2+) serves as cofactor.

It localises to the cell membrane. It catalyses the reaction tRNA(Lys) + L-lysine + ATP = L-lysyl-tRNA(Lys) + AMP + diphosphate. It carries out the reaction L-lysyl-tRNA(Lys) + a 1,2-diacyl-sn-glycero-3-phospho-(1'-sn-glycerol) = a 1,2-diacyl-sn-glycero-3-phospho-1'-(3'-O-L-lysyl)-sn-glycerol + tRNA(Lys). In terms of biological role, catalyzes the production of L-lysyl-tRNA(Lys)transfer and the transfer of a lysyl group from L-lysyl-tRNA(Lys) to membrane-bound phosphatidylglycerol (PG), which produces lysylphosphatidylglycerol (LPG), one of the components of the bacterial membrane with a positive net charge. LPG synthesis contributes to the resistance to cationic antimicrobial peptides (CAMPs) and likely protects M.tuberculosis against the CAMPs produced by competiting microorganisms (bacteriocins). In fact, the modification of anionic phosphatidylglycerol with positively charged L-lysine results in repulsion of the peptides. The polypeptide is Lysylphosphatidylglycerol biosynthesis bifunctional protein LysX (lysX) (Mycobacterium avium (strain 104)).